A 479-amino-acid polypeptide reads, in one-letter code: Chromosomal replication initiator protein DnaA (479 aa).

Residues M1–I74 form a domain I, interacts with DnaA modulators region. A domain II region spans residues I74 to R142. The tract at residues A143–A360 is domain III, AAA+ region. The ATP site is built by G187, G189, K190, and S191. The segment at R361–I479 is domain IV, binds dsDNA.

The protein belongs to the DnaA family. As to quaternary structure, oligomerizes as a right-handed, spiral filament on DNA at oriC.

The protein resides in the cytoplasm. In terms of biological role, plays an essential role in the initiation and regulation of chromosomal replication. ATP-DnaA binds to the origin of replication (oriC) to initiate formation of the DNA replication initiation complex once per cell cycle. Binds the DnaA box (a 9 base pair repeat at the origin) and separates the double-stranded (ds)DNA. Forms a right-handed helical filament on oriC DNA; dsDNA binds to the exterior of the filament while single-stranded (ss)DNA is stabiized in the filament's interior. The ATP-DnaA-oriC complex binds and stabilizes one strand of the AT-rich DNA unwinding element (DUE), permitting loading of DNA polymerase. After initiation quickly degrades to an ADP-DnaA complex that is not apt for DNA replication. Binds acidic phospholipids. This chain is Chromosomal replication initiator protein DnaA, found in Desulfotalea psychrophila (strain LSv54 / DSM 12343).